Reading from the N-terminus, the 689-residue chain is 7SK snRNA methylphosphate capping enzyme (689 aa).

An N-acetylmethionine modification is found at M1. A compositionally biased stretch (basic and acidic residues) spans M1–P10. Positions M1–F167 are disordered. Residues G52–Q84 show a composition bias toward low complexity. 4 positions are modified to phosphoserine: S57, S60, S69, and S101. Omega-N-methylarginine is present on R117. S152, S175, and S179 each carry phosphoserine. At T213 the chain carries Phosphothreonine. Phosphoserine is present on residues S216, S217, and S254. Positions T258–H269 are enriched in basic residues. The interval T258–Q314 is disordered. T291 is modified (phosphothreonine). Phosphoserine is present on residues S330 and S344. The tract at residues L332–K407 is disordered. A compositionally biased stretch (low complexity) spans G338–S359. Basic residues predominate over residues S360–S369. The residue at position 390 (S390) is a Phosphoserine. Residues Y422, R433, G451 to N453, D474 to I475, N559 to Y560, and L581 each bind S-adenosyl-L-methionine. In terms of domain architecture, Bin3-type SAM spans D431–S686. A Glycyl lysine isopeptide (Lys-Gly) (interchain with G-Cter in SUMO2) cross-link involves residue K643.

This sequence belongs to the methyltransferase superfamily. As to quaternary structure, core component of the 7SK RNP complex, at least composed of 7SK RNA, LARP7, MEPCE, HEXIM1 (or HEXIM2) and P-TEFb (composed of CDK9 and CCNT1/cyclin-T1). Interacts with METTL16. Interacts with RBM7; upon genotoxic stress this interaction is enhanced, triggering the release of inactive P-TEFb complex from the core, yielding to P-TEFb complex activation. In terms of processing, dephosphorylated at Ser-152 by the PNUTS-PP1 complex, promoting RNA polymerase II transcription pause-release. As to expression, expressed in chronic myeloid leukemia cells, adrenal gland, brain, cerebellum, kidney, lung, mammary gland and testis. Weakly or not expressed in other tissues.

Its subcellular location is the nucleus. The catalysed reaction is a 5'-end triphospho-guanosine-ribonucleotide-snRNA + S-adenosyl-L-methionine = a 5'-end methyltriphosphate-guanosine-ribonucleotide-snRNA + S-adenosyl-L-homocysteine. In terms of biological role, S-adenosyl-L-methionine-dependent methyltransferase that adds a methylphosphate cap at the 5'-end of 7SK snRNA (7SK RNA), leading to stabilize it. Also has a non-enzymatic function as part of the 7SK RNP complex: the 7SK RNP complex sequesters the positive transcription elongation factor b (P-TEFb) in a large inactive 7SK RNP complex preventing RNA polymerase II phosphorylation and subsequent transcriptional elongation. The 7SK RNP complex also promotes snRNA gene transcription by RNA polymerase II via interaction with the little elongation complex (LEC). In the 7SK RNP complex, MEPCE is required to stabilize 7SK RNA and facilitate the assembly of 7SK RNP complex. MEPCE has a non-enzymatic function in the 7SK RNP complex; interaction with LARP7 within the 7SK RNP complex occluding its catalytic center. Also required for stability of U6 snRNAs. This is 7SK snRNA methylphosphate capping enzyme from Homo sapiens (Human).